We begin with the raw amino-acid sequence, 194 residues long: Imidazoleglycerol-phosphate dehydratase (194 aa).

The protein belongs to the imidazoleglycerol-phosphate dehydratase family.

It localises to the cytoplasm. It catalyses the reaction D-erythro-1-(imidazol-4-yl)glycerol 3-phosphate = 3-(imidazol-4-yl)-2-oxopropyl phosphate + H2O. Its pathway is amino-acid biosynthesis; L-histidine biosynthesis; L-histidine from 5-phospho-alpha-D-ribose 1-diphosphate: step 6/9. The protein is Imidazoleglycerol-phosphate dehydratase of Lacticaseibacillus paracasei (strain ATCC 334 / BCRC 17002 / CCUG 31169 / CIP 107868 / KCTC 3260 / NRRL B-441) (Lactobacillus paracasei).